The chain runs to 133 residues: U-scoloptoxin(11)-Sm1a (133 aa).

An N-terminal signal peptide occupies residues 1-19 (MIWFLAFILFLAAGELVSS).

This sequence belongs to the scoloptoxin-11 family. Contains 10 disulfide bonds. Expressed by the venom gland.

Its subcellular location is the secreted. The chain is U-scoloptoxin(11)-Sm1a from Scolopendra morsitans (Tanzanian blue ringleg centipede).